Consider the following 83-residue polypeptide: Large ribosomal subunit protein bL31B (83 aa).

It belongs to the bacterial ribosomal protein bL31 family. Type B subfamily. Part of the 50S ribosomal subunit.

The polypeptide is Large ribosomal subunit protein bL31B (Tropheryma whipplei (strain TW08/27) (Whipple's bacillus)).